The primary structure comprises 288 residues: Diaminopimelate epimerase (288 aa).

Residues asparagine 13, glutamine 51, and asparagine 71 each contribute to the substrate site. The Proton donor role is filled by cysteine 80. Substrate contacts are provided by residues 81–82, asparagine 166, asparagine 200, and 218–219; these read GN and ER. Cysteine 227 serves as the catalytic Proton acceptor. Position 228–229 (228–229) interacts with substrate; that stretch reads GT.

This sequence belongs to the diaminopimelate epimerase family. In terms of assembly, homodimer.

It localises to the cytoplasm. It catalyses the reaction (2S,6S)-2,6-diaminopimelate = meso-2,6-diaminopimelate. It participates in amino-acid biosynthesis; L-lysine biosynthesis via DAP pathway; DL-2,6-diaminopimelate from LL-2,6-diaminopimelate: step 1/1. Its function is as follows. Catalyzes the stereoinversion of LL-2,6-diaminopimelate (L,L-DAP) to meso-diaminopimelate (meso-DAP), a precursor of L-lysine and an essential component of the bacterial peptidoglycan. The protein is Diaminopimelate epimerase of Caulobacter vibrioides (strain ATCC 19089 / CIP 103742 / CB 15) (Caulobacter crescentus).